The chain runs to 581 residues: Serine/threonine-protein kinase PINK1, mitochondrial (581 aa).

Residues 1 to 77 (MAVRQALGRG…RFFRQSVAGL (77 aa)) constitute a mitochondrion transit peptide. At 78-93 (AARLQRQFVVRAWGCA) the chain is on the mitochondrial intermembrane side. Residues 94–110 (GPCGRAVFLAFGLGLGL) traverse the membrane as a helical segment. The interval 111–117 (IEEKQAE) is required for outer membrane localization. At 111–581 (IEEKQAESRR…LLLCSWRAAL (471 aa)) the chain is on the cytoplasmic side. The 356-residue stretch at 156 to 511 (YLIGQSIGKG…VAANVLHLSL (356 aa)) folds into the Protein kinase domain. Residues 162–170 (IGKGCSAAV) and lysine 186 each bind ATP. The tract at residues 189–208 (GLLPGRGPGTSAPGEGQERA) is disordered. At serine 228 the chain carries Phosphoserine; by autocatalysis. The active-site Proton acceptor is aspartate 362. A Phosphoserine; by autocatalysis modification is found at serine 402.

The protein belongs to the protein kinase superfamily. Ser/Thr protein kinase family. As to quaternary structure, upon mitochondrial depolarization, it forms a supercomplex with TOM and TIM23 complexes. PINK1-TOM-TIM23 supercomplex formation requires PINK1 interaction with TOMM20 and TOMM70 and is critical for PINK1 stabilization at the outer mitochondrial membrane, kinase activation and downstream mitophagy. Upon mitochondrial depolarization, interacts with TIMM23; the interaction is required for PINK1 accumulation at the outer mitochondrial membrane, kinase activation by autophosphorylation and PRKN recruitement to mitochondria. Interacts with PRKN. Interacts with FBXO7. Forms a complex with PRKN and PARK7. Interacts with NENF. It depends on Mg(2+) as a cofactor. Post-translationally, proteolytically cleaved. In healthy cells, the precursor is continuously imported into the inner mitochondrial membrane (IMM), where it is proteolytically cleaved by mitochondrial-processing peptidase (MPP) and then undergoes further proteolytic cleavage by PARL or AFG3L2 to give rise to the 52 kDa short form. The 52 kDa short form is then released into the cytosol where it rapidly undergoes proteasome-dependent degradation. In unhealthy cells, when cellular stress conditions lead to the loss of mitochondrial membrane potential, mitochondrial import is impaired leading to the precursor accumulating on the outer mitochondrial membrane (OMM). If accumulation at the OMM fails and it is imported into the depolarized mitochondria, it undergoes cleavage by the IMM protease OMA1, promoting its subsequent degradation by the proteasome. Autophosphorylated. Loss of mitochondrial membrane potential results in the precursor accumulating on the outer mitochondrial membrane (OMM) where it is activated by autophosphorylation. Autophosphorylation at Ser-228 and Ser-402 is sufficient and essential for selective recruitment of PRKN to depolarized mitochondria, via PINK1-dependent phosphorylation of ubiquitin and maybe PRKN. As to expression, highly expressed in heart, skeletal muscle and testis, and at lower levels in brain, placenta, liver, kidney, pancreas, prostate, ovary and small intestine. Present in the embryonic testis from an early stage of development.

Its subcellular location is the mitochondrion outer membrane. The protein localises to the mitochondrion inner membrane. The protein resides in the cytoplasm. It localises to the cytosol. It catalyses the reaction L-seryl-[protein] + ATP = O-phospho-L-seryl-[protein] + ADP + H(+). The catalysed reaction is L-threonyl-[protein] + ATP = O-phospho-L-threonyl-[protein] + ADP + H(+). Serine/threonine-protein kinase which acts as a sensor of mitochondrial damage and protects against mitochondrial dysfunction during cellular stress. It phosphorylates mitochondrial proteins to coordinate mitochondrial quality control mechanisms that remove and replace dysfunctional mitochondrial components. Depending on the severity of mitochondrial damage, activity ranges from preventing apoptosis and stimulating mitochondrial biogenesis to eliminating severely damaged mitochondria via PINK1-PRKN-dependent mitophagy. When cellular stress results in irreversible mitochondrial damage, PINK1 accumulates at the outer mitochondrial membrane (OMM) where it phosphorylates pre-existing polyubiquitin chains at 'Ser-65', recruits PRKN from the cytosol to the OMM and activates PRKN by phosphorylation at 'Ser-65'; activated PRKN then ubiquinates VDAC1 and other OMM proteins to initiate mitophagy. The PINK1-PRKN pathway also promotes fission of damaged mitochondria through phosphorylation and PRKN-dependent degradation of mitochondrial proteins involved in fission such as MFN2. This prevents the refusion of unhealthy mitochondria with the mitochondrial network or initiates mitochondrial fragmentation facilitating their later engulfment by autophagosomes. Also promotes mitochondrial fission independently of PRKN and ATG7-mediated mitophagy, via the phosphorylation and activation of DNM1L. Regulates motility of damaged mitochondria by promoting the ubiquitination and subsequent degradation of MIRO1 and MIRO2; in motor neurons, this likely inhibits mitochondrial intracellular anterograde transport along the axons which probably increases the chance of the mitochondria undergoing mitophagy in the soma. Required for ubiquinone reduction by mitochondrial complex I by mediating phosphorylation of complex I subunit NDUFA10. Phosphorylates LETM1, positively regulating its mitochondrial calcium transport activity. This Homo sapiens (Human) protein is Serine/threonine-protein kinase PINK1, mitochondrial (PINK1).